Reading from the N-terminus, the 337-residue chain is Large ribosomal subunit protein uL3 (337 aa).

Residues 1 to 20 (MASIHRPKRGSLAFSPRKRA) are disordered.

This sequence belongs to the universal ribosomal protein uL3 family. In terms of assembly, part of the 50S ribosomal subunit. Forms a cluster with proteins L14 and L24e.

In terms of biological role, one of the primary rRNA binding proteins, it binds directly near the 3'-end of the 23S rRNA, where it nucleates assembly of the 50S subunit. The chain is Large ribosomal subunit protein uL3 from Methanosarcina acetivorans (strain ATCC 35395 / DSM 2834 / JCM 12185 / C2A).